Here is a 337-residue protein sequence, read N- to C-terminus: Cytoskeleton protein RodZ (337 aa).

Topologically, residues 1 to 111 (MNTEATHDQN…LGKRRKKRDG (111 aa)) are cytoplasmic. An HTH cro/C1-type domain is found at 19–71 (LRNAREQLGLSQQAVAERLCLKVSTVRDIEEDKAPADLASTFLRGYIRSYARL). A DNA-binding region (H-T-H motif) is located at residues 30 to 49 (QQAVAERLCLKVSTVRDIEE). Residues 112–132 (WLMTFTWLVLFVVIGLSGAWW) traverse the membrane as a helical; Signal-anchor for type II membrane protein segment. At 133–337 (WQDHKAQQEE…TLNAEQSPAQ (205 aa)) the chain is on the periplasmic side. Polar residues predominate over residues 145–167 (TMADQSSAELSSNSEQGQSVPLN). The tract at residues 145–218 (TMADQSSAEL…AVVSPSQANV (74 aa)) is disordered. A compositionally biased stretch (low complexity) spans 168-207 (TSTTTDPATTSTPPASVDTTATNTQTPAVTAPAPAVDPQQ). The span at 208–218 (NAVVSPSQANV) shows a compositional bias: polar residues.

Belongs to the RodZ family.

Its subcellular location is the cell inner membrane. Functionally, cytoskeletal protein that is involved in cell-shape control through regulation of the length of the long axis. The chain is Cytoskeleton protein RodZ from Shigella flexneri serotype 5b (strain 8401).